The primary structure comprises 205 residues: Outer-membrane lipoprotein LolB (205 aa).

Residues 1-17 form the signal peptide; sequence MFLRHCITFTLIALLAG. C18 carries N-palmitoyl cysteine lipidation. Residue C18 is the site of S-diacylglycerol cysteine attachment.

Belongs to the LolB family. In terms of assembly, monomer.

It localises to the cell outer membrane. Its function is as follows. Plays a critical role in the incorporation of lipoproteins in the outer membrane after they are released by the LolA protein. The protein is Outer-membrane lipoprotein LolB of Pseudomonas putida (strain GB-1).